We begin with the raw amino-acid sequence, 637 residues long: Threonine--tRNA ligase (637 aa).

In terms of domain architecture, TGS spans 1-61; it reads MLNITLPDGS…TEDSSVQIIT (61 aa). Residues 242 to 533 form a catalytic region; it reads DHRKLGKQLD…LIENHAGSFP (292 aa). Zn(2+) is bound by residues cysteine 333, histidine 384, and histidine 510.

This sequence belongs to the class-II aminoacyl-tRNA synthetase family. As to quaternary structure, homodimer. Requires Zn(2+) as cofactor.

It localises to the cytoplasm. The catalysed reaction is tRNA(Thr) + L-threonine + ATP = L-threonyl-tRNA(Thr) + AMP + diphosphate + H(+). In terms of biological role, catalyzes the attachment of threonine to tRNA(Thr) in a two-step reaction: L-threonine is first activated by ATP to form Thr-AMP and then transferred to the acceptor end of tRNA(Thr). Also edits incorrectly charged L-seryl-tRNA(Thr). In Neisseria meningitidis serogroup C (strain 053442), this protein is Threonine--tRNA ligase.